A 557-amino-acid polypeptide reads, in one-letter code: Formate--tetrahydrofolate ligase (557 aa).

Residue 66-73 coordinates ATP; sequence TPAGEGKS.

It belongs to the formate--tetrahydrofolate ligase family.

It carries out the reaction (6S)-5,6,7,8-tetrahydrofolate + formate + ATP = (6R)-10-formyltetrahydrofolate + ADP + phosphate. The protein operates within one-carbon metabolism; tetrahydrofolate interconversion. The chain is Formate--tetrahydrofolate ligase from Clostridium botulinum (strain Kyoto / Type A2).